Consider the following 38-residue polypeptide: Photosystem II reaction center protein L (38 aa).

A helical membrane pass occupies residues 17–37 (SLYWGLLLIFVLAVLFSSYIF).

The protein belongs to the PsbL family. PSII is composed of 1 copy each of membrane proteins PsbA, PsbB, PsbC, PsbD, PsbE, PsbF, PsbH, PsbI, PsbJ, PsbK, PsbL, PsbM, PsbT, PsbX, PsbY, PsbZ, Psb30/Ycf12, at least 3 peripheral proteins of the oxygen-evolving complex and a large number of cofactors. It forms dimeric complexes.

The protein localises to the plastid. The protein resides in the chloroplast thylakoid membrane. Its function is as follows. One of the components of the core complex of photosystem II (PSII). PSII is a light-driven water:plastoquinone oxidoreductase that uses light energy to abstract electrons from H(2)O, generating O(2) and a proton gradient subsequently used for ATP formation. It consists of a core antenna complex that captures photons, and an electron transfer chain that converts photonic excitation into a charge separation. This subunit is found at the monomer-monomer interface and is required for correct PSII assembly and/or dimerization. The chain is Photosystem II reaction center protein L from Tetradesmus obliquus (Green alga).